We begin with the raw amino-acid sequence, 121 residues long: Basic phospholipase A2 homolog BaTX (121 aa).

Disulfide bonds link Cys-26–Cys-115, Cys-28–Cys-44, Cys-43–Cys-95, Cys-49–Cys-121, Cys-50–Cys-88, Cys-57–Cys-81, and Cys-75–Cys-86. The interval 105–117 (KKYRYYLKPLCKK) is important for membrane-damaging activities in eukaryotes and bacteria; heparin-binding.

It belongs to the phospholipase A2 family. Group II subfamily. K49 sub-subfamily. In terms of assembly, homodimer; non-covalently linked. As to expression, expressed by the venom gland.

It is found in the secreted. In terms of biological role, snake venom phospholipase A2 homolog that lacks enzymatic activity. Is myotoxic and displays edema-inducing activities. In vitro, produced time-dependent, irreversible neuromuscular blockade in isolated mouse phrenic nerve-diaphragm and chick biventer cervicis preparations. A model of myotoxic mechanism has been proposed: an apo Lys49-PLA2 is activated by the entrance of a hydrophobic molecule (e.g. fatty acid) at the hydrophobic channel of the protein leading to a reorientation of a monomer. This reorientation causes a transition between 'inactive' to 'active' states, causing alignment of C-terminal and membrane-docking sites (MDoS) side-by-side and putting the membrane-disruption sites (MDiS) in the same plane, exposed to solvent and in a symmetric position for both monomers. The MDoS region stabilizes the toxin on membrane by the interaction of charged residues with phospholipid head groups. Subsequently, the MDiS region destabilizes the membrane with penetration of hydrophobic residues. This insertion causes a disorganization of the membrane, allowing an uncontrolled influx of ions (i.e. calcium and sodium), and eventually triggering irreversible intracellular alterations and cell death. The protein is Basic phospholipase A2 homolog BaTX of Bothrops alternatus (Urutu).